A 205-amino-acid polypeptide reads, in one-letter code: Large ribosomal subunit protein uL4 (205 aa).

The segment at 45-97 (RQGTSAVKNRSAVRGGGKKPWRQKGTGRARQGSIRAPQWRGGGTVFGPTPRSY) is disordered. Over residues 60–71 (GGKKPWRQKGTG) the composition is skewed to basic residues.

Belongs to the universal ribosomal protein uL4 family. Part of the 50S ribosomal subunit.

Its function is as follows. One of the primary rRNA binding proteins, this protein initially binds near the 5'-end of the 23S rRNA. It is important during the early stages of 50S assembly. It makes multiple contacts with different domains of the 23S rRNA in the assembled 50S subunit and ribosome. Functionally, forms part of the polypeptide exit tunnel. The protein is Large ribosomal subunit protein uL4 of Lactobacillus johnsonii (strain CNCM I-12250 / La1 / NCC 533).